Consider the following 468-residue polypeptide: MKVDFDSLNNIFFVGIKGSGVCSLACFLNSKGYFVEGVDVPDKFYTDDILNNNEISYYENIYEFSLKELDRSFDLIVYSSAYDKDGLQVLLEAKELNIPILSYSEVLGELSRKHYSIGIAGSHGKTTTTAFLGILFDKLGLNPNVIVGSSVKDFGDNSAIAGISDIFIVETCEYKKHFLYFSPNMLILTNVDYEHVDFFKNYEALEDAFLQYINNLKKNGILIINSDDKNLLKIKSQINREDINIFSFGSRDLSNFQISNIVVKNEYFCFSFLGLYNIELRTVLFHNILNFSAALLALNLFLESNGKSIFDFEEVVKRVAKNYSGIKRRSELIKEKKGVIYMDDYAHHPREIRATLFGIKNFYKNKRIILDFMPHTFTRTKEFFDDFVEVLNIADVLILHNIYLSNRENFNPDELSFKLFLNIKKINKNTYFFKDVKDSINFIKSLLISGDLFITMGAGNNFILHDFL.

Gly121 to Thr127 provides a ligand contact to ATP.

Belongs to the MurCDEF family.

Its subcellular location is the cytoplasm. It catalyses the reaction UDP-N-acetyl-alpha-D-muramate + L-alanine + ATP = UDP-N-acetyl-alpha-D-muramoyl-L-alanine + ADP + phosphate + H(+). It functions in the pathway cell wall biogenesis; peptidoglycan biosynthesis. Cell wall formation. The polypeptide is UDP-N-acetylmuramate--L-alanine ligase (Borrelia garinii subsp. bavariensis (strain ATCC BAA-2496 / DSM 23469 / PBi) (Borreliella bavariensis)).